The following is a 224-amino-acid chain: UPF0758 protein Noc_0236 (224 aa).

The region spanning 102–224 (VLTDPQTTQR…TLSFAERGLL (123 aa)) is the MPN domain. Zn(2+) is bound by residues His173, His175, and Asp186. A JAMM motif motif is present at residues 173 to 186 (HNHPSGVAEPSRAD).

The protein belongs to the UPF0758 family.

The chain is UPF0758 protein Noc_0236 from Nitrosococcus oceani (strain ATCC 19707 / BCRC 17464 / JCM 30415 / NCIMB 11848 / C-107).